The primary structure comprises 221 residues: Large ribosomal subunit protein uL3 (221 aa).

Belongs to the universal ribosomal protein uL3 family. As to quaternary structure, part of the 50S ribosomal subunit. Forms a cluster with proteins L14 and L19.

Functionally, one of the primary rRNA binding proteins, it binds directly near the 3'-end of the 23S rRNA, where it nucleates assembly of the 50S subunit. This chain is Large ribosomal subunit protein uL3, found in Chlamydia felis (strain Fe/C-56) (Chlamydophila felis).